The sequence spans 858 residues: Protein VACUOLELESS1 (858 aa).

It belongs to the VPS16 family. In terms of assembly, core component of at least two putative endosomal tethering complexes, the homotypic fusion and vacuole protein sorting (HOPS) complex and the class C core vacuole/endosome tethering (CORVET) complex. Their common core is composed of the class C Vps proteins VPS11, VCL1, VPS18 and VPS33, which in HOPS further associates with VPS39 and VPS41 and in CORVET with VPS3. In terms of tissue distribution, expressed in roots, leaves, stems, siliques, flowers and mature pollen.

Its subcellular location is the vacuole membrane. It localises to the prevacuolar compartment membrane. In terms of biological role, required for vacuole biogenesis and vacuole enlargment in dividing and expanding cells. Involved in the docking or fusion of prevacuolar vesicles. Important for the function of both male and female gametophytes, but is not essential for the germination and development of pollen. The protein is Protein VACUOLELESS1 (VCL1) of Arabidopsis thaliana (Mouse-ear cress).